The chain runs to 333 residues: Geminin coiled-coil domain-containing protein 1 (333 aa).

The stretch at 83 to 118 forms a coiled coil; the sequence is QLYRNKQLQDTLLQKEEELARLHEENNHLRQYLNST. Basic residues predominate over residues 145-154; that stretch reads KEKRKPKEHR. Residues 145-165 are disordered; the sequence is KEKRKPKEHRHSPAEIPQFKT.

The protein belongs to the GEMC1 family. In terms of processing, highly phosphorylated by CDK2; stimulates initiation of DNA replication.

It localises to the nucleus. Functionally, regulator of DNA replication. Promotes initiation of chromosomal DNA replication by mediating TOPBP1- and CDK2-dependent recruitment of CDC45L onto replication origins. In Mus musculus (Mouse), this protein is Geminin coiled-coil domain-containing protein 1 (Gmnc).